Consider the following 515-residue polypeptide: Rop guanine nucleotide exchange factor 12 (515 aa).

In terms of domain architecture, PRONE spans 83–446 (QARERQLLAD…RAGNKRNTPL (364 aa)). A Phosphoserine modification is found at S510.

Interacts (via C-terminus) with PRK2. Interacts with PRK6. Expressed in pollen grains.

The protein resides in the cytoplasm. The protein localises to the cell membrane. Its activity is regulated as follows. Phosphorylation at Ser-510 by PRK2 may release ROPGEF12 auto-inhibition, thereby activating ROPGEF12 and downstream Rop signaling. Guanine-nucleotide exchange factor (GEF) that acts as an activator of Rop (Rho of plants) GTPases by promoting the exchange of GDP for GTP. May be recruited by PRK2 at the plasma membrane to maintain polar Rop activity in the pollen tube and control polarized pollen tube growth. The polypeptide is Rop guanine nucleotide exchange factor 12 (Arabidopsis thaliana (Mouse-ear cress)).